A 526-amino-acid polypeptide reads, in one-letter code: Bifunctional purine biosynthesis protein PurH (526 aa).

The 145-residue stretch at 1–145 (MIRTALLSVS…KNHQDVTVLI (145 aa)) folds into the MGS-like domain.

This sequence belongs to the PurH family.

It carries out the reaction (6R)-10-formyltetrahydrofolate + 5-amino-1-(5-phospho-beta-D-ribosyl)imidazole-4-carboxamide = 5-formamido-1-(5-phospho-D-ribosyl)imidazole-4-carboxamide + (6S)-5,6,7,8-tetrahydrofolate. The catalysed reaction is IMP + H2O = 5-formamido-1-(5-phospho-D-ribosyl)imidazole-4-carboxamide. The protein operates within purine metabolism; IMP biosynthesis via de novo pathway; 5-formamido-1-(5-phospho-D-ribosyl)imidazole-4-carboxamide from 5-amino-1-(5-phospho-D-ribosyl)imidazole-4-carboxamide (10-formyl THF route): step 1/1. It participates in purine metabolism; IMP biosynthesis via de novo pathway; IMP from 5-formamido-1-(5-phospho-D-ribosyl)imidazole-4-carboxamide: step 1/1. This chain is Bifunctional purine biosynthesis protein PurH, found in Polynucleobacter asymbioticus (strain DSM 18221 / CIP 109841 / QLW-P1DMWA-1) (Polynucleobacter necessarius subsp. asymbioticus).